A 507-amino-acid polypeptide reads, in one-letter code: MNPMPSALPSDFLHVDLVTLSPLILLAAAAVVVMLTAAFYRHPRPVMILTLAGLVLSFMALFLSQGTASSQVTTLLILDQYALFFIGLIVVATFVVAILCYRYFGGGESRHEALYILLLLAALGGGVLVASSHFASFLLGLELLSISLFALIAYPRFTEHPLEAGIKYLILAGFSSGLLLFGMALVYAQLGTMQFVKIGTMLAAPGAALELYGLAGLALIVTGVGFKLALVPFHMWTPDVYEGAPVPITAFIATASKGAMLVLLLRYFLMAGAHQSHSITFALSLIAVATILVGNLLALLQNNIKRILAYSSIAQLGYLLVGFLAFDQLAIEAVAYFLTAYFVTMLGAFGVVTVLSEGFNGGSAGEFHDAGEKDSDRLADYAGLFWHRPWLAGVFTAMLLSLAGIPLTMGFIGKFYIVTAGVEASLWMPVITLVIGSIIGLFYYMRIIAVMYGWGPEAAGEAIMLRAASPSFAESATLAALALLLIWLGIFPAQLIGVLEGAGGGLT.

Transmembrane regions (helical) follow at residues 17–37, 46–66, 81–101, 113–133, 134–154, 168–188, 190–210, 211–231, 245–265, 279–299, 307–327, 334–354, 392–412, 425–445, and 478–498; these read LVTL…MLTA, VMIL…LSQG, YALF…ILCY, ALYI…ASSH, FASF…LIAY, YLIL…LVYA, LGTM…AALE, LYGL…LALV, PVPI…VLLL, ITFA…LLAL, ILAY…LAFD, VAYF…VVTV, AGVF…MGFI, SLWM…FYYM, and LAAL…LIGV.

This sequence belongs to the complex I subunit 2 family. As to quaternary structure, NDH-1 is composed of 14 different subunits. Subunits NuoA, H, J, K, L, M, N constitute the membrane sector of the complex.

Its subcellular location is the cell inner membrane. It catalyses the reaction a quinone + NADH + 5 H(+)(in) = a quinol + NAD(+) + 4 H(+)(out). Functionally, NDH-1 shuttles electrons from NADH, via FMN and iron-sulfur (Fe-S) centers, to quinones in the respiratory chain. The immediate electron acceptor for the enzyme in this species is believed to be ubiquinone. Couples the redox reaction to proton translocation (for every two electrons transferred, four hydrogen ions are translocated across the cytoplasmic membrane), and thus conserves the redox energy in a proton gradient. The chain is NADH-quinone oxidoreductase subunit N from Nitrosospira multiformis (strain ATCC 25196 / NCIMB 11849 / C 71).